Consider the following 499-residue polypeptide: Rhamnogalacturonan I rhamnosyltransferase 1 (499 aa).

The helical; Signal-anchor for type II membrane protein transmembrane segment at 31 to 50 (WFVRVCSSILVWTCLVQLFA) threads the bilayer. N-linked (GlcNAc...) asparagine glycans are attached at residues N88, N121, and N207. A substrate-binding site is contributed by 261 to 263 (HLR). N-linked (GlcNAc...) asparagine glycans are attached at residues N375, N435, and N496.

It belongs to the glycosyltransferase GT106 family.

It localises to the golgi apparatus membrane. The enzyme catalyses alpha-D-galacturonosyl-[(1-&gt;2)-alpha-L-rhamnosyl-(1-&gt;4)-alpha-D-galacturonosyl](n) + UDP-beta-L-rhamnose = [(1-&gt;2)-alpha-L-rhamnosyl-(1-&gt;4)-alpha-D-galacturonosyl](n+1) + UDP + H(+). It participates in glycan metabolism; pectin biosynthesis. In terms of biological role, glycosyltransferase involved in the formation of rhamnogalacturonan I (RG-I) oligosaccharides in the seed coat mucilage, which is a specialized cell wall with abundant RG-I. Transfers the rhamnose residue from UDP-beta-L-rhamnose to RG-I oligosaccharides. The polypeptide is Rhamnogalacturonan I rhamnosyltransferase 1 (Arabidopsis thaliana (Mouse-ear cress)).